Here is a 491-residue protein sequence, read N- to C-terminus: Monothiol glutaredoxin-S11 (491 aa).

3 Glutaredoxin domains span residues 151-253 (NKRL…NIPL), 287-389 (KERL…GIVA), and 394-491 (EDRL…TLSE). Lysine 411 is a glutathione binding site. Cysteine 419 contributes to the [2Fe-2S] cluster binding site. Residues arginine 448, phenylalanine 460, and 473–474 (CD) each bind glutathione.

It belongs to the glutaredoxin family. CGFS subfamily.

The protein localises to the cytoplasm. May only reduce GSH-thiol disulfides, but not protein disulfides. The polypeptide is Monothiol glutaredoxin-S11 (GRXS11) (Oryza sativa subsp. japonica (Rice)).